A 414-amino-acid polypeptide reads, in one-letter code: UDP-N-acetylmuramoylalanine--D-glutamate ligase (414 aa).

104 to 110 serves as a coordination point for ATP; it reads GSNGKST.

The protein belongs to the MurCDEF family.

The protein localises to the cytoplasm. It catalyses the reaction UDP-N-acetyl-alpha-D-muramoyl-L-alanine + D-glutamate + ATP = UDP-N-acetyl-alpha-D-muramoyl-L-alanyl-D-glutamate + ADP + phosphate + H(+). The protein operates within cell wall biogenesis; peptidoglycan biosynthesis. Functionally, cell wall formation. Catalyzes the addition of glutamate to the nucleotide precursor UDP-N-acetylmuramoyl-L-alanine (UMA). This is UDP-N-acetylmuramoylalanine--D-glutamate ligase from Francisella philomiragia subsp. philomiragia (strain ATCC 25017 / CCUG 19701 / FSC 153 / O#319-036).